Consider the following 86-residue polypeptide: Small ribosomal subunit protein bS20 (86 aa).

A compositionally biased stretch (basic residues) spans 1 to 11; that stretch reads MANIKQQKKRN. Residues 1–21 form a disordered region; it reads MANIKQQKKRNKTNEKRRLQN.

Belongs to the bacterial ribosomal protein bS20 family.

In terms of biological role, binds directly to 16S ribosomal RNA. The protein is Small ribosomal subunit protein bS20 of Onion yellows phytoplasma (strain OY-M).